The chain runs to 621 residues: Methionine--tRNA ligase (621 aa).

The short motif at 11–21 (PYANGPRHIGH) is the 'HIGH' region element. Residues C143, C146, C156, and C159 each contribute to the Zn(2+) site. Residues 347-351 (KFSSS) carry the 'KMSKS' region motif. ATP is bound at residue S350.

This sequence belongs to the class-I aminoacyl-tRNA synthetase family. MetG type 1 subfamily. As to quaternary structure, monomer. The cofactor is Zn(2+).

Its subcellular location is the cytoplasm. The catalysed reaction is tRNA(Met) + L-methionine + ATP = L-methionyl-tRNA(Met) + AMP + diphosphate. Functionally, is required not only for elongation of protein synthesis but also for the initiation of all mRNA translation through initiator tRNA(fMet) aminoacylation. The polypeptide is Methionine--tRNA ligase (Bifidobacterium longum (strain NCC 2705)).